A 329-amino-acid chain; its full sequence is Calcium homeostasis modulator protein (329 aa).

The Cytoplasmic portion of the chain corresponds to 1–14 (MTTSINSVVTVFQN). A helical transmembrane segment spans residues 15–35 (VFTNHGSTLLNGILIATTVGG). At 36–53 (QSLVRKLTFSCPCAYPLN) the chain is on the extracellular side. A helical membrane pass occupies residues 54–74 (IYHSLVFMFGPTAALLLIGIT). Topologically, residues 75–103 (VNSTTWKLAHGFFFRVRDTRHSWKTTCVS) are cytoplasmic. Residues 104-124 (WIEVLIQSSVAPIAWLFVVFL) form a helical membrane-spanning segment. The Extracellular segment spans residues 125–191 (DGGYYRCYRS…DASYLEAESQ (67 aa)). Residue Asn148 is glycosylated (N-linked (GlcNAc...) asparagine). The helical transmembrane segment at 192 to 212 (IYAWGLLLFSGVAAFLVITCN) threads the bilayer. The Cytoplasmic portion of the chain corresponds to 213 to 329 (RMCDKYTLVQ…QIIVDETKED (117 aa)).

This sequence belongs to the CALHM family. In terms of tissue distribution, expressed in head and body wall muscles, IL2, ASG, ASI, ASJ, PHA and PHB sensory neurons, and spermatheca.

It localises to the cell membrane. Its function is as follows. Pore-forming subunit of a voltage-gated ion channel. Permeable to monovalent cations, divalent cations and anions with selectivity Ca(2+) &gt; Mg(2+) &gt; Na(+) = K(+) &gt; Cl(-). Acts both as a voltage-gated and calcium-activated ion channel. Required for normal locomotion. This chain is Calcium homeostasis modulator protein, found in Caenorhabditis elegans.